The primary structure comprises 101 residues: MIGLADYLILGALLFSLGVAGIFINRKNLLVLLMCIELILLAVNMNFIAFSAYLQDLAGQVFVFFILTVAAAEAAIGLAIVVALFRNRGSINVGDLDSMKG.

Transmembrane regions (helical) follow at residues 4 to 24, 30 to 50, and 61 to 81; these read LADYLILGALLFSLGVAGIFI, LVLLMCIELILLAVNMNFIAF, and VFVFFILTVAAAEAAIGLAIV.

The protein belongs to the complex I subunit 4L family. NDH-1 is composed of 14 different subunits. Subunits NuoA, H, J, K, L, M, N constitute the membrane sector of the complex.

It is found in the cell inner membrane. It catalyses the reaction a quinone + NADH + 5 H(+)(in) = a quinol + NAD(+) + 4 H(+)(out). NDH-1 shuttles electrons from NADH, via FMN and iron-sulfur (Fe-S) centers, to quinones in the respiratory chain. The immediate electron acceptor for the enzyme in this species is believed to be ubiquinone. Couples the redox reaction to proton translocation (for every two electrons transferred, four hydrogen ions are translocated across the cytoplasmic membrane), and thus conserves the redox energy in a proton gradient. The polypeptide is NADH-quinone oxidoreductase subunit K (Alkalilimnicola ehrlichii (strain ATCC BAA-1101 / DSM 17681 / MLHE-1)).